The chain runs to 233 residues: Cytochrome c biogenesis ATP-binding export protein CcmA (233 aa).

The ABC transporter domain maps to 17–233 (FAGEDLLCVR…AAGLFLEDEG (217 aa)). 49-56 (GPNGSGKS) serves as a coordination point for ATP.

This sequence belongs to the ABC transporter superfamily. CcmA exporter (TC 3.A.1.107) family. As to quaternary structure, the complex is composed of two ATP-binding proteins (CcmA) and two transmembrane proteins (CcmB).

It localises to the cell inner membrane. The catalysed reaction is heme b(in) + ATP + H2O = heme b(out) + ADP + phosphate + H(+). Functionally, part of the ABC transporter complex CcmAB involved in the biogenesis of c-type cytochromes; once thought to export heme, this seems not to be the case, but its exact role is uncertain. Responsible for energy coupling to the transport system. This Rhodospirillum rubrum (strain ATCC 11170 / ATH 1.1.1 / DSM 467 / LMG 4362 / NCIMB 8255 / S1) protein is Cytochrome c biogenesis ATP-binding export protein CcmA.